The primary structure comprises 284 residues: MEMO1 family protein MmarC5_0191 (284 aa).

The protein belongs to the MEMO1 family.

The chain is MEMO1 family protein MmarC5_0191 from Methanococcus maripaludis (strain C5 / ATCC BAA-1333).